Here is a 76-residue protein sequence, read N- to C-terminus: Large ribosomal subunit protein bL31 (76 aa).

C16, C18, C37, and C40 together coordinate Zn(2+).

It belongs to the bacterial ribosomal protein bL31 family. Type A subfamily. As to quaternary structure, part of the 50S ribosomal subunit. It depends on Zn(2+) as a cofactor.

Binds the 23S rRNA. The sequence is that of Large ribosomal subunit protein bL31 from Maridesulfovibrio salexigens (strain ATCC 14822 / DSM 2638 / NCIMB 8403 / VKM B-1763) (Desulfovibrio salexigens).